A 25-amino-acid polypeptide reads, in one-letter code: Panurgine R (25 aa).

Cystine bridges form between Cys8-Cys23 and Cys11-Cys19.

It localises to the target cell membrane. The protein resides in the secreted. Functionally, antimicrobial peptide active against Gram-positive bacteria M.luteus (MIC=0.8 uM) and B.subtilis (MIC=1.5 uM). Less active against Gram-negative bacteria E.coli (MIC=32.5 uM) and yeast C.albicans (MIC=18.7 uM). Not active against S.aureus and P.aeruginosa. Has no hemolytic activity against human erythrocytes. Probably acts by disrupting membranes of target cells. The chain is Panurgine R from Panurgus calcaratus (Solitary bee).